Here is a 155-residue protein sequence, read N- to C-terminus: Ribosomal RNA large subunit methyltransferase H (155 aa).

S-adenosyl-L-methionine is bound by residues Leu72, Gly104, and 123 to 128; that span reads LAKITL.

The protein belongs to the RNA methyltransferase RlmH family. In terms of assembly, homodimer.

It is found in the cytoplasm. It catalyses the reaction pseudouridine(1915) in 23S rRNA + S-adenosyl-L-methionine = N(3)-methylpseudouridine(1915) in 23S rRNA + S-adenosyl-L-homocysteine + H(+). Specifically methylates the pseudouridine at position 1915 (m3Psi1915) in 23S rRNA. The polypeptide is Ribosomal RNA large subunit methyltransferase H (Mycoplasma mycoides subsp. mycoides SC (strain CCUG 32753 / NCTC 10114 / PG1)).